Here is a 513-residue protein sequence, read N- to C-terminus: ATP synthase subunit alpha (513 aa).

169–176 lines the ATP pocket; sequence GDRQTGKT.

It belongs to the ATPase alpha/beta chains family. F-type ATPases have 2 components, CF(1) - the catalytic core - and CF(0) - the membrane proton channel. CF(1) has five subunits: alpha(3), beta(3), gamma(1), delta(1), epsilon(1). CF(0) has three main subunits: a(1), b(2) and c(9-12). The alpha and beta chains form an alternating ring which encloses part of the gamma chain. CF(1) is attached to CF(0) by a central stalk formed by the gamma and epsilon chains, while a peripheral stalk is formed by the delta and b chains.

The protein resides in the cell inner membrane. The catalysed reaction is ATP + H2O + 4 H(+)(in) = ADP + phosphate + 5 H(+)(out). In terms of biological role, produces ATP from ADP in the presence of a proton gradient across the membrane. The alpha chain is a regulatory subunit. In Shewanella baltica (strain OS223), this protein is ATP synthase subunit alpha.